A 120-amino-acid polypeptide reads, in one-letter code: Ribonuclease P protein component (120 aa).

It belongs to the RnpA family. As to quaternary structure, consists of a catalytic RNA component (M1 or rnpB) and a protein subunit.

The catalysed reaction is Endonucleolytic cleavage of RNA, removing 5'-extranucleotides from tRNA precursor.. Its function is as follows. RNaseP catalyzes the removal of the 5'-leader sequence from pre-tRNA to produce the mature 5'-terminus. It can also cleave other RNA substrates such as 4.5S RNA. The protein component plays an auxiliary but essential role in vivo by binding to the 5'-leader sequence and broadening the substrate specificity of the ribozyme. The polypeptide is Ribonuclease P protein component (Latilactobacillus sakei subsp. sakei (strain 23K) (Lactobacillus sakei subsp. sakei)).